An 892-amino-acid chain; its full sequence is Alanine--tRNA ligase (892 aa).

Positions 577, 581, 680, and 684 each coordinate Zn(2+).

It belongs to the class-II aminoacyl-tRNA synthetase family. It depends on Zn(2+) as a cofactor.

It is found in the cytoplasm. It carries out the reaction tRNA(Ala) + L-alanine + ATP = L-alanyl-tRNA(Ala) + AMP + diphosphate. Catalyzes the attachment of alanine to tRNA(Ala) in a two-step reaction: alanine is first activated by ATP to form Ala-AMP and then transferred to the acceptor end of tRNA(Ala). Also edits incorrectly charged Ser-tRNA(Ala) and Gly-tRNA(Ala) via its editing domain. The polypeptide is Alanine--tRNA ligase (Arthrobacter sp. (strain FB24)).